The following is an 808-amino-acid chain: Probable phosphoketolase 1 (808 aa).

It belongs to the XFP family. Thiamine diphosphate is required as a cofactor.

The chain is Probable phosphoketolase 1 from Nostoc sp. (strain PCC 7120 / SAG 25.82 / UTEX 2576).